We begin with the raw amino-acid sequence, 95 residues long: Aspartyl/glutamyl-tRNA(Asn/Gln) amidotransferase subunit C (95 aa).

The protein belongs to the GatC family. In terms of assembly, heterotrimer of A, B and C subunits.

The catalysed reaction is L-glutamyl-tRNA(Gln) + L-glutamine + ATP + H2O = L-glutaminyl-tRNA(Gln) + L-glutamate + ADP + phosphate + H(+). It catalyses the reaction L-aspartyl-tRNA(Asn) + L-glutamine + ATP + H2O = L-asparaginyl-tRNA(Asn) + L-glutamate + ADP + phosphate + 2 H(+). Its function is as follows. Allows the formation of correctly charged Asn-tRNA(Asn) or Gln-tRNA(Gln) through the transamidation of misacylated Asp-tRNA(Asn) or Glu-tRNA(Gln) in organisms which lack either or both of asparaginyl-tRNA or glutaminyl-tRNA synthetases. The reaction takes place in the presence of glutamine and ATP through an activated phospho-Asp-tRNA(Asn) or phospho-Glu-tRNA(Gln). The protein is Aspartyl/glutamyl-tRNA(Asn/Gln) amidotransferase subunit C of Chromohalobacter salexigens (strain ATCC BAA-138 / DSM 3043 / CIP 106854 / NCIMB 13768 / 1H11).